Here is a 477-residue protein sequence, read N- to C-terminus: Tripartite motif-containing protein 72 (477 aa).

Residues cysteine 14, cysteine 17, cysteine 29, histidine 31, cysteine 34, cysteine 37, cysteine 53, cysteine 56, cysteine 86, histidine 89, cysteine 97, aspartate 100, cysteine 105, cysteine 108, histidine 114, and histidine 117 each contribute to the Zn(2+) site. The RING-type zinc-finger motif lies at 14–57; sequence CPLCLQLFDAPVTAECGHSFCRACLGRVAGEPAADGTVLCPCCQ. The segment at 81-122 adopts a B box-type zinc-finger fold; sequence VPQGHCEEHLDPLSIYCEQDRALVCGVCASLGSHRGHRLLPA. Residues 135–232 are a coiled coil; that stretch reads QQKLQLQEAC…EKVLEEVADK (98 aa). Cysteine 144 carries the post-translational modification S-nitrosocysteine. Serine 255 carries the post-translational modification Phosphoserine. One can recognise a B30.2/SPRY domain in the interval 271-475; it reads DFKFQVWRKM…PLLLVGPEGA (205 aa).

Belongs to the TRIM/RBCC family. Homodimer. Homooligomer; disulfide-linked. Oligomerizes on the phospholipid membrane. Interacts with DYSF and CAV3. Disulfide bond formation at Cys-242 occurs in case of membrane damage that cause the entry of the oxidized milieu of the extracellular space, resulting in homooligomerization. In terms of processing, S-nitrosylation at Cys-144 stabilizes TRIM72 and protects against oxidation-induced protein degradation and cell death.

Its subcellular location is the cell membrane. The protein resides in the sarcolemma. The protein localises to the cytoplasmic vesicle membrane. The catalysed reaction is S-ubiquitinyl-[E2 ubiquitin-conjugating enzyme]-L-cysteine + [acceptor protein]-L-lysine = [E2 ubiquitin-conjugating enzyme]-L-cysteine + N(6)-ubiquitinyl-[acceptor protein]-L-lysine.. It participates in protein modification; protein ubiquitination. With respect to regulation, specifically binds phosphatidylserine. The binding to phospholipids enhances ubiquitination activity. Functionally, muscle-specific E3 ubiquitin-protein ligase that plays a central role in cell membrane repair by nucleating the assembly of the repair machinery at injury sites. Its ubiquitination activity is mediated by E2 ubiquitin-conjugating enzymes UBE2D1, UBE2D2 and UBE2D3. Acts as a sensor of oxidation: upon membrane damage, entry of extracellular oxidative environment results in disulfide bond formation and homooligomerization at the injury site. This oligomerization acts as a nucleation site for recruitment of TRIM72-containing vesicles to the injury site, leading to membrane patch formation. Probably acts upstream of the Ca(2+)-dependent membrane resealing process. Required for transport of DYSF to sites of cell injury during repair patch formation. Regulates membrane budding and exocytosis. May be involved in the regulation of the mobility of KCNB1-containing endocytic vesicles. The chain is Tripartite motif-containing protein 72 from Homo sapiens (Human).